Consider the following 364-residue polypeptide: Fructose-bisphosphate aldolase B (364 aa).

Residue Ala-2 is modified to N-acetylalanine. At Lys-13 the chain carries N6-succinyllysine. Ser-36 carries the phosphoserine modification. Phosphothreonine is present on Thr-39. Residue Arg-43 participates in beta-D-fructose 1,6-bisphosphate binding. Ser-89 bears the Phosphoserine mark. The residue at position 119 (Thr-119) is a Phosphothreonine. Lys-121 carries the N6-succinyllysine modification. Ser-132 carries the post-translational modification Phosphoserine. Glu-188 acts as the Proton acceptor in catalysis. The active-site Schiff-base intermediate with dihydroxyacetone-P is the Lys-230. Ser-272, Ser-276, Ser-299, and Ser-301 each carry phosphoserine. 272 to 274 (SGG) provides a ligand contact to beta-D-fructose 1,6-bisphosphate. Arg-304 is a beta-D-fructose 1,6-bisphosphate binding site. Position 309 is a phosphoserine (Ser-309). Position 317 is an N6-succinyllysine (Lys-317).

Belongs to the class I fructose-bisphosphate aldolase family. Homotetramer. Interacts with BBS1, BBS2, BBS4 and BBS7. Forms a ternary complex with G6PD and TP53; this interaction is direct.

It is found in the cytoplasm. Its subcellular location is the cytosol. The protein resides in the cytoskeleton. The protein localises to the microtubule organizing center. It localises to the centrosome. It is found in the centriolar satellite. It catalyses the reaction beta-D-fructose 1,6-bisphosphate = D-glyceraldehyde 3-phosphate + dihydroxyacetone phosphate. It carries out the reaction beta-D-fructose 1-phosphate = D-glyceraldehyde + dihydroxyacetone phosphate. It participates in carbohydrate degradation; glycolysis; D-glyceraldehyde 3-phosphate and glycerone phosphate from D-glucose: step 4/4. The protein operates within carbohydrate biosynthesis; gluconeogenesis. It functions in the pathway carbohydrate metabolism; fructose metabolism. In terms of biological role, catalyzes the aldol cleavage of fructose 1,6-biphosphate to form two triosephosphates dihydroxyacetone phosphate and D-glyceraldehyde 3-phosphate in glycolysis as well as the reverse stereospecific aldol addition reaction in gluconeogenesis. In fructolysis, metabolizes fructose 1-phosphate derived from the phosphorylation of dietary fructose by fructokinase into dihydroxyacetone phosphate and D-glyceraldehyde. Acts as an adapter independently of its enzymatic activity, exerts a tumor suppressor role by stabilizing the ternary complex with G6PD and TP53 to inhibit G6PD activity and keep oxidative pentose phosphate metabolism in check. The protein is Fructose-bisphosphate aldolase B (Aldob) of Rattus norvegicus (Rat).